The primary structure comprises 207 residues: Vascular endothelial growth factor B (207 aa).

Residues 1–21 form the signal peptide; sequence MSPLLRRLLLVALLQLARTQA. 3 cysteine pairs are disulfide-bonded: cysteine 47–cysteine 89, cysteine 78–cysteine 122, and cysteine 82–cysteine 124. A compositionally biased stretch (basic and acidic residues) spans 129–139; sequence KESAVKPDRVA. The disordered stretch occupies residues 129–178; the sequence is KESAVKPDRVAIPHHRPQPRSVPGWDSTPGASSPADIIHPTPAPGSSARL.

Belongs to the PDGF/VEGF growth factor family. Homodimer; disulfide-linked. Can also form heterodimer with VEGF. VEGF-B186 is O-glycosylated. As to expression, abundantly expressed in heart, brain, kidney and skeletal muscle.

It is found in the secreted. In terms of biological role, growth factor for endothelial cells. VEGF-B167 binds heparin and neuropilin-1 whereas the binding to neuropilin-1 of VEGF-B186 is regulated by proteolysis. VEGF-B seems to be required for normal heart function in adult but is not required for proper development of the cardiovascular system either during development or for angiogenesis in adults. The protein is Vascular endothelial growth factor B (Vegfb) of Mus musculus (Mouse).